The primary structure comprises 43 residues: Protein PsbN (43 aa).

A helical membrane pass occupies residues 7-27; it reads IAIFISCLIVSFTGYALYTAF.

The protein belongs to the PsbN family.

The protein localises to the plastid. The protein resides in the chloroplast thylakoid membrane. In terms of biological role, may play a role in photosystem I and II biogenesis. The polypeptide is Protein PsbN (Psilotum nudum (Whisk fern)).